Consider the following 309-residue polypeptide: Glutaminase (309 aa).

Substrate contacts are provided by Ser64, Asn114, Glu160, Asn167, Tyr191, Tyr243, and Val261.

This sequence belongs to the glutaminase family. In terms of assembly, homotetramer.

It carries out the reaction L-glutamine + H2O = L-glutamate + NH4(+). This Methylobacterium nodulans (strain LMG 21967 / CNCM I-2342 / ORS 2060) protein is Glutaminase.